Consider the following 1497-residue polypeptide: DNA-directed RNA polymerase subunit beta (1497 aa).

Belongs to the RNA polymerase beta chain family. In terms of assembly, the RNAP catalytic core consists of 2 alpha, 1 beta, 1 beta' and 1 omega subunit. When a sigma factor is associated with the core the holoenzyme is formed, which can initiate transcription.

The enzyme catalyses RNA(n) + a ribonucleoside 5'-triphosphate = RNA(n+1) + diphosphate. Its function is as follows. DNA-dependent RNA polymerase catalyzes the transcription of DNA into RNA using the four ribonucleoside triphosphates as substrates. The polypeptide is DNA-directed RNA polymerase subunit beta (Trichlorobacter lovleyi (strain ATCC BAA-1151 / DSM 17278 / SZ) (Geobacter lovleyi)).